The chain runs to 469 residues: 3-isopropylmalate dehydratase large subunit (469 aa).

[4Fe-4S] cluster contacts are provided by C347, C407, and C410.

It belongs to the aconitase/IPM isomerase family. LeuC type 1 subfamily. As to quaternary structure, heterodimer of LeuC and LeuD. [4Fe-4S] cluster is required as a cofactor.

The enzyme catalyses (2R,3S)-3-isopropylmalate = (2S)-2-isopropylmalate. The protein operates within amino-acid biosynthesis; L-leucine biosynthesis; L-leucine from 3-methyl-2-oxobutanoate: step 2/4. Catalyzes the isomerization between 2-isopropylmalate and 3-isopropylmalate, via the formation of 2-isopropylmaleate. This Prochlorococcus marinus subsp. pastoris (strain CCMP1986 / NIES-2087 / MED4) protein is 3-isopropylmalate dehydratase large subunit.